We begin with the raw amino-acid sequence, 120 residues long: MLKLFAKYTSIGVLNTLIHWVVFGVCIYVAHTNQALANFAGFVVAVSFSFFANAKFTFKASTTTMRYMLYVGFMGTLSATVGWAADRCALPPMITLVTFSAISLVCGFVYSKFIVFRDAK.

The Cytoplasmic segment spans residues 1 to 9 (MLKLFAKYT). Residues 10–30 (SIGVLNTLIHWVVFGVCIYVA) form a helical membrane-spanning segment. At 31-33 (HTN) the chain is on the periplasmic side. A helical transmembrane segment spans residues 34-54 (QALANFAGFVVAVSFSFFANA). Residues 55–64 (KFTFKASTTT) lie on the Cytoplasmic side of the membrane. The chain crosses the membrane as a helical span at residues 65–85 (MRYMLYVGFMGTLSATVGWAA). Over 86–88 (DRC) the chain is Periplasmic. The chain crosses the membrane as a helical span at residues 89–109 (ALPPMITLVTFSAISLVCGFV). Residues 110–120 (YSKFIVFRDAK) lie on the Cytoplasmic side of the membrane.

Belongs to the GtrA family.

Its subcellular location is the cell inner membrane. Involved in O antigen modification. Involved in the translocation of bactoprenol-linked glucose across the cytoplasmic membrane. This chain is Prophage bactoprenol-linked glucose translocase homolog (yfdG), found in Escherichia coli (strain K12).